The following is a 443-amino-acid chain: Putative transporter AmpG 1 (443 aa).

Helical transmembrane passes span 6 to 26, 43 to 63, 74 to 96, 106 to 128, 144 to 164, 172 to 192, 255 to 275, 300 to 320, 326 to 346, 355 to 375, 394 to 414, and 416 to 436; these read HVCI…MITG, IGIL…APVF, ILGH…TSIL, VLLS…ILSA, GIYI…AIYL, KIYQ…ILVS, DISL…YRLP, VCKF…GIIM, LYSI…FILL, ILFI…TAYI, LSSM…YMVV, and FGWQ…LLIL.

Belongs to the major facilitator superfamily.

The protein localises to the cell inner membrane. The protein is Putative transporter AmpG 1 (ampG1) of Rickettsia typhi (strain ATCC VR-144 / Wilmington).